Consider the following 876-residue polypeptide: Leucine--tRNA ligase (876 aa).

The short motif at 43 to 53 (PYPSGRIHMGH) is the 'HIGH' region element. The short motif at 632–636 (KMSKS) is the 'KMSKS' region element. Lys635 serves as a coordination point for ATP.

It belongs to the class-I aminoacyl-tRNA synthetase family.

It is found in the cytoplasm. The catalysed reaction is tRNA(Leu) + L-leucine + ATP = L-leucyl-tRNA(Leu) + AMP + diphosphate. This is Leucine--tRNA ligase from Rhizobium etli (strain CIAT 652).